A 123-amino-acid chain; its full sequence is Ribonuclease P protein component (123 aa).

This sequence belongs to the RnpA family. As to quaternary structure, consists of a catalytic RNA component (M1 or rnpB) and a protein subunit.

It catalyses the reaction Endonucleolytic cleavage of RNA, removing 5'-extranucleotides from tRNA precursor.. Its function is as follows. RNaseP catalyzes the removal of the 5'-leader sequence from pre-tRNA to produce the mature 5'-terminus. It can also cleave other RNA substrates such as 4.5S RNA. The protein component plays an auxiliary but essential role in vivo by binding to the 5'-leader sequence and broadening the substrate specificity of the ribozyme. In Streptomyces bikiniensis, this protein is Ribonuclease P protein component.